The primary structure comprises 381 residues: Succinate--CoA ligase [ADP-forming] subunit beta (381 aa).

Positions K9–D236 constitute an ATP-grasp domain. Residues K45, G52 to G54, A94, and E99 each bind ATP. Mg(2+) is bound by residues N191 and D205. Substrate-binding positions include N256 and G313 to T315.

Belongs to the succinate/malate CoA ligase beta subunit family. Heterotetramer of two alpha and two beta subunits. It depends on Mg(2+) as a cofactor.

It carries out the reaction succinate + ATP + CoA = succinyl-CoA + ADP + phosphate. The enzyme catalyses GTP + succinate + CoA = succinyl-CoA + GDP + phosphate. Its pathway is carbohydrate metabolism; tricarboxylic acid cycle; succinate from succinyl-CoA (ligase route): step 1/1. Functionally, succinyl-CoA synthetase functions in the citric acid cycle (TCA), coupling the hydrolysis of succinyl-CoA to the synthesis of either ATP or GTP and thus represents the only step of substrate-level phosphorylation in the TCA. The beta subunit provides nucleotide specificity of the enzyme and binds the substrate succinate, while the binding sites for coenzyme A and phosphate are found in the alpha subunit. This chain is Succinate--CoA ligase [ADP-forming] subunit beta, found in Gemmatimonas aurantiaca (strain DSM 14586 / JCM 11422 / NBRC 100505 / T-27).